The chain runs to 149 residues: Transcriptional regulator MraZ (149 aa).

2 consecutive SpoVT-AbrB domains span residues 7-54 and 83-126; these read KYVN…GISH and AVQL…QPQN.

This sequence belongs to the MraZ family. As to quaternary structure, forms oligomers.

It is found in the cytoplasm. The protein localises to the nucleoid. The polypeptide is Transcriptional regulator MraZ (Rickettsia felis (strain ATCC VR-1525 / URRWXCal2) (Rickettsia azadi)).